The primary structure comprises 312 residues: Ribosomal protein L11 methyltransferase (312 aa).

Residues Thr-162, Gly-183, Asp-205, and Asn-248 each coordinate S-adenosyl-L-methionine.

This sequence belongs to the methyltransferase superfamily. PrmA family.

The protein localises to the cytoplasm. The catalysed reaction is L-lysyl-[protein] + 3 S-adenosyl-L-methionine = N(6),N(6),N(6)-trimethyl-L-lysyl-[protein] + 3 S-adenosyl-L-homocysteine + 3 H(+). Methylates ribosomal protein L11. In Exiguobacterium sp. (strain ATCC BAA-1283 / AT1b), this protein is Ribosomal protein L11 methyltransferase.